Consider the following 399-residue polypeptide: Endo-1,4-beta-xylanase C (399 aa).

An N-terminal signal peptide occupies residues 1 to 20; sequence MFKFSASLAALAALVPFVAA. The 36-residue stretch at 21 to 56 folds into the CBM1 domain; that stretch reads QSPEWGQCGGIGWTGPTTCVAGTTCVESNPYYSQCL. One can recognise a GH10 domain in the interval 81-396; sequence SAKLHTLAKA…KPAFNGIAAG (316 aa). Catalysis depends on Glu-212, which acts as the Proton donor. Glu-318 (nucleophile) is an active-site residue. A disulfide bond links Cys-346 and Cys-352.

The protein belongs to the glycosyl hydrolase 10 (cellulase F) family.

The protein localises to the secreted. It carries out the reaction Endohydrolysis of (1-&gt;4)-beta-D-xylosidic linkages in xylans.. The protein operates within glycan degradation; xylan degradation. Endo-1,4-beta-xylanase involved in the hydrolysis of xylan, a major structural heterogeneous polysaccharide found in plant biomass representing the second most abundant polysaccharide in the biosphere, after cellulose. This is Endo-1,4-beta-xylanase C (xynC) from Phanerodontia chrysosporium (White-rot fungus).